The primary structure comprises 1083 residues: LIM and calponin homology domains-containing protein 1 (1083 aa).

Disordered regions lie at residues 1 to 22 (MASNAALQGEDIPQPQESPPDT), 185 to 248 (SERS…VRKD), and 291 to 311 (REDYRKSWSTATSPLGGERPF). Residues 21–138 (DTACMEAQKW…TVYWLGKAAN (118 aa)) form the Calponin-homology (CH) domain. The segment covering 229-248 (RGSDSESDLPHRRIPDVRKD) has biased composition (basic and acidic residues). A coiled-coil region spans residues 356–424 (LARWKTRRRS…HVAYKNAKTR (69 aa)). The span at 462 to 474 (PSLLSSSEDPNPL) shows a compositional bias: low complexity. Disordered regions lie at residues 462–512 (PSLL…LISP), 625–661 (QKDEPDSFVQEESVHSVEQLSEGNTQSNSTTQAVPAV), 698–725 (KEAKKNSLPPLKSSENVEESSKIKENES), and 759–779 (SPALVPNLSSPNRSCTWDPEE). Composition is skewed to polar residues over residues 478–512 (RQQSLPSPKYTSTVEATVTPSSPCESKSPTGLISP) and 640–657 (SVEQLSEGNTQSNSTTQA). A compositionally biased stretch (basic and acidic residues) spans 716–725 (ESSKIKENES). Positions 784-835 (QEKWQQEQERLLQERYQKEQEKLKEEWEKAQKEVEEEERKYYEEERKIIEDT) form a coiled coil. Residues 987–1006 (KEETLNSSQSTSQCQSPNRS) form a disordered region. Positions 991–1006 (LNSSQSTSQCQSPNRS) are enriched in polar residues. The region spanning 1011–1077 (KLCSTCGLPL…NDCYVKSRTA (67 aa)) is the LIM zinc-binding domain.

Belongs to the LIMCH1 family.

It is found in the cytoplasm. It localises to the cytoskeleton. Its subcellular location is the stress fiber. Functionally, actin stress fibers-associated protein that activates non-muscle myosin IIa. Through the activation of non-muscle myosin IIa, positively regulates actin stress fibers assembly and stabilizes focal adhesions. It therefore negatively regulates cell spreading and cell migration. This is LIM and calponin homology domains-containing protein 1 (limch1) from Xenopus laevis (African clawed frog).